The following is a 1645-amino-acid chain: Protein MON2 homolog (1645 aa).

The protein belongs to the MON2 family.

May be required for traffic between late Golgi and early endosomes. This chain is Protein MON2 homolog, found in Caenorhabditis briggsae.